We begin with the raw amino-acid sequence, 583 residues long: ATP-dependent lipid A-core flippase (583 aa).

Helical transmembrane passes span 27–47 (LAVAVVALIINAVSDTYMVSL), 69–89 (LLVFGLMFIRGISSFVSTYCL), 142–162 (ALVSIVREGTSIIGLLVLMFY), 165–185 (WQLSLVLILVAPVVAWAIGFV), and 249–269 (AAANPIIQMIASIAIVVVLYL). In terms of domain architecture, ABC transmembrane type-1 spans 28 to 310 (AVAVVALIIN…LTNVTSQFQR (283 aa)). In terms of domain architecture, ABC transporter spans 342-578 (VNVKDISFTY…DGAYAQLHRI (237 aa)). 376–383 (GRSGSGKS) provides a ligand contact to ATP.

Belongs to the ABC transporter superfamily. Lipid exporter (TC 3.A.1.106) family. As to quaternary structure, homodimer.

It localises to the cell inner membrane. It catalyses the reaction ATP + H2O + lipid A-core oligosaccharideSide 1 = ADP + phosphate + lipid A-core oligosaccharideSide 2.. Its function is as follows. Involved in lipopolysaccharide (LPS) biosynthesis. Translocates lipid A-core from the inner to the outer leaflet of the inner membrane. Transmembrane domains (TMD) form a pore in the inner membrane and the ATP-binding domain (NBD) is responsible for energy generation. The polypeptide is ATP-dependent lipid A-core flippase (Vibrio vulnificus (strain CMCP6)).